The sequence spans 47 residues: Large ribosomal subunit protein bL33 (47 aa).

The protein belongs to the bacterial ribosomal protein bL33 family.

The sequence is that of Large ribosomal subunit protein bL33 from Staphylococcus capitis.